Here is a 705-residue protein sequence, read N- to C-terminus: Polyribonucleotide nucleotidyltransferase (705 aa).

Residues Asp485 and Asp491 each coordinate Mg(2+). One can recognise a KH domain in the interval 552–611; sequence PKVFTMSINPSKIKDVIGAGGKTINKIIDETGVKIDIKEDGSVFVTAEDYESGKKALAMI. The S1 motif domain occupies 621-689; that stretch reads GEVYLGKVTK…SMGRVNLSRK (69 aa).

The protein belongs to the polyribonucleotide nucleotidyltransferase family. It depends on Mg(2+) as a cofactor.

Its subcellular location is the cytoplasm. The enzyme catalyses RNA(n+1) + phosphate = RNA(n) + a ribonucleoside 5'-diphosphate. Its function is as follows. Involved in mRNA degradation. Catalyzes the phosphorolysis of single-stranded polyribonucleotides processively in the 3'- to 5'-direction. In Clostridium novyi (strain NT), this protein is Polyribonucleotide nucleotidyltransferase.